Consider the following 662-residue polypeptide: LIM domain kinase 1 (662 aa).

LIM zinc-binding domains follow at residues 24 to 83 (PVCA…RFGE) and 84 to 145 (LCHG…MVVT). The PDZ domain maps to 166–259 (LVSIPACSDG…LLQLTIEHDP (94 aa)). The interval 262–328 (PLPRDLALPC…ASQRKDIGRS (67 aa)) is disordered. A compositionally biased stretch (pro residues) spans 272-287 (SPLPDPHSPLRSPVPA). Positions 309–320 (SPGSSSVGSPAS) are enriched in low complexity. Residues 346–611 (LIHGEVLGKG…PSFSKLEQWL (266 aa)) enclose the Protein kinase domain. ATP is bound by residues 352 to 360 (LGKGCFGQA) and Lys375. Asp467 is an active-site residue.

This sequence belongs to the protein kinase superfamily. TKL Ser/Thr protein kinase family. In terms of tissue distribution, expressed predominantly in the brain.

The protein localises to the cytoplasm. It localises to the nucleus. Its subcellular location is the cytoskeleton. It is found in the cell projection. The protein resides in the growth cone. The catalysed reaction is L-seryl-[protein] + ATP = O-phospho-L-seryl-[protein] + ADP + H(+). It carries out the reaction L-threonyl-[protein] + ATP = O-phospho-L-threonyl-[protein] + ADP + H(+). Protein kinase which regulates actin filament dynamics. Phosphorylates and inactivates the actin binding/depolymerizing factor cofilin, thereby stabilizing the actin cytoskeleton. Required for motility of the axon growth cone. The chain is LIM domain kinase 1 (LIMK1) from Gallus gallus (Chicken).